The sequence spans 309 residues: tRNA dimethylallyltransferase (309 aa).

Position 13–20 (13–20 (GPTAVGKS)) interacts with ATP. 15–20 (TAVGKS) provides a ligand contact to substrate.

It belongs to the IPP transferase family. Monomer. The cofactor is Mg(2+).

The enzyme catalyses adenosine(37) in tRNA + dimethylallyl diphosphate = N(6)-dimethylallyladenosine(37) in tRNA + diphosphate. In terms of biological role, catalyzes the transfer of a dimethylallyl group onto the adenine at position 37 in tRNAs that read codons beginning with uridine, leading to the formation of N6-(dimethylallyl)adenosine (i(6)A). This chain is tRNA dimethylallyltransferase, found in Lacticaseibacillus paracasei (strain ATCC 334 / BCRC 17002 / CCUG 31169 / CIP 107868 / KCTC 3260 / NRRL B-441) (Lactobacillus paracasei).